Consider the following 204-residue polypeptide: Allatotropin (204 aa).

The N-terminal stretch at Met1 to Gly20 is a signal peptide. A propeptide spanning residues Ala21–Thr35 is cleaved from the precursor. The disordered stretch occupies residues Arg47–Thr83. Phe49 carries the phenylalanine amide modification. The span at Gly50–His65 shows a compositional bias: basic and acidic residues. Residues Asp53 to Phe204 constitute a propeptide that is removed on maturation.

In terms of tissue distribution, expressed extensively in the brain, frontal ganglion and terminal ganglion of the day 2 fifth instar larva (at protein level). Not expressed in the larval brain after day 4 of the fifth instar, or in the brain of the pupa or adult. Expression in the terminal ganglion is localized to cells in the posterior portion of the seventh neuromere of day 2 fifth instar larvae. In the pupa and adult expression is detected in the medial region of neuromere 6, the dorsal medial region of neuromere 7, and the posterior neuromere of the terminal ganglion (at protein level). In the frontal ganglion expression decreases in the wandering larvae and is present at low levels in during pupal ecdysis, but is not detected in the adult. Expressed in the subesophageal ganglion of day 2 fifth instar larva, but not at any time before or after day 2. Not expressed in the abdominal ganglia 1-6 of the day 2 fifth instar larva (at protein level). Expressed in the anterior neuromeres of the pterothoracic ganglion in pupa but not in adult (at protein level). Expressed in the unfused abdominal ganglia of day 10 pupae, and in pharate adult is expressed in median neurosecretory cells M1, M2 and M5, but not in median neurosecretory cells M3 and M4 (at protein level). Not expressed in the differentiated median neurosecretory cells M5 of the larva (at protein level). In the pharate adult brain isoform 3 is the predominant form, with lower levels of isoform 2 and very low levels of isoform 1 detected. In the pharate adult nerve cord isoform 3 is the predominant form, with lower levels of isoform 2 and no isoform 1 detected. In the pharate adult frontal ganglion isoform 3 is expressed, but not isoform 1 and isoform 2.

Its subcellular location is the secreted. In terms of biological role, neuropeptide stimulator of juvenile hormone synthesis. Cardioregulatory neurohormone that increases heart beat rate in the adult but not in the larva. Inhibits active ion transport in the midgut of feeding fourth instar and day 2 fifth instar larva, but not in the midgut of pharate or wandering fifth instar larva. This chain is Allatotropin, found in Manduca sexta (Tobacco hawkmoth).